Consider the following 175-residue polypeptide: Respiratory supercomplex factor 1-B, mitochondrial (175 aa).

The HIG1 domain maps to 3 to 94 (DQADVLADPD…TERKQRREFE (92 aa)). A run of 2 helical transmembrane segments spans residues 30 to 46 (PLIP…LYRA) and 66 to 83 (IYAQ…GMYY). The stretch at 83–115 (YKTERKQRREFEKKVEERKAQEKRDAWLRELEA) forms a coiled coil.

This sequence belongs to the RCF1 family. Associates with the respiratory chain complex III/complex IV supercomplex.

It localises to the mitochondrion membrane. Cytochrome c oxidase subunit which plays a role in assembly of respiratory supercomplexes. The protein is Respiratory supercomplex factor 1-B, mitochondrial (rcf1-B) of Talaromyces marneffei (strain ATCC 18224 / CBS 334.59 / QM 7333) (Penicillium marneffei).